The chain runs to 1032 residues: uncharacterized protein (1032 aa).

Residues 1–17 (MYEEIRMKFTDIFIRRP) are Cytoplasmic-facing. A helical membrane pass occupies residues 18-36 (VLAVSISLLMIILGLQAIS). Topologically, residues 37-337 (KLAVREYPKM…TIAINSSIHE (301 aa)) are periplasmic. Residues 338-357 (VIKTIGEATLIVLVVILMFI) form a helical membrane-spanning segment. At 358–363 (GSFRAI) the chain is on the cytoplasmic side. A helical membrane pass occupies residues 364–383 (LIPILAIPISLIGVLMLLQS). Topologically, residues 384 to 389 (FNFSIN) are periplasmic. A helical transmembrane segment spans residues 390 to 411 (LMTLLALILAIGLVVDDAIVVL). The Cytoplasmic portion of the chain corresponds to 412–438 (ENIDRHIKAGETPFRAAIIGTREIAVP). A helical membrane pass occupies residues 439 to 457 (VISMTIALIAVYSPMALMG). Over 458-470 (GITGTLFKEFALT) the chain is Periplasmic. The helical transmembrane segment at 471-493 (LAGAVFISGVVALTLSPMMSSKL) threads the bilayer. Residues 494-529 (LKSNAKPTWMEERVEHTLGKVNRVYEYMLDLVMLNR) lie on the Cytoplasmic side of the membrane. A helical transmembrane segment spans residues 530-548 (KSMLAFAVVIFSTLPFLFN). At 549 to 852 (SLSSELTPNE…ARQLVQEGNA (304 aa)) the chain is on the periplasmic side. A helical transmembrane segment spans residues 853 to 872 (LAVTFALAVIIIFLVLAIQF). Over 873–878 (ESIRDP) the chain is Cytoplasmic. A helical membrane pass occupies residues 879–898 (MVIMISVPLAVSGALVSLNI). Topologically, residues 899–910 (LSFFSIAGTTLN) are periplasmic. Residues 911–932 (IYSQVGLITLVGLITKHGILMC) traverse the membrane as a helical segment. Over 933–960 (EVAKEEQLNHGKTRIEAITHAAKVRLRP) the chain is Cytoplasmic. The helical transmembrane segment at 961-979 (ILMTTAAMVAGLIPLLYAT) threads the bilayer. The Periplasmic segment spans residues 980–992 (GAGAVSRFSIGIV). A helical transmembrane segment spans residues 993 to 1015 (IVAGLSIGTIFTLFVLPVVYSYV). Over 1016–1032 (ATEHKPLPVFDENKTTH) the chain is Cytoplasmic.

Belongs to the resistance-nodulation-cell division (RND) (TC 2.A.6) family.

The protein resides in the cell inner membrane. Could be a drug efflux pump. This is an uncharacterized protein from Haemophilus influenzae (strain ATCC 51907 / DSM 11121 / KW20 / Rd).